Consider the following 138-residue polypeptide: Single-stranded DNA-binding protein 3 (138 aa).

Positions 1-104 (MINNIVLVGR…VVAENFQLLE (104 aa)) constitute an SSB domain. Low complexity predominate over residues 105–121 (SRNSQQQTNQSGNSSNS). The disordered stretch occupies residues 105–138 (SRNSQQQTNQSGNSSNSYFGNANKMDISDDDLPF). The Important for interaction with partner proteins signature appears at 133-138 (DDDLPF).

As to quaternary structure, homotetramer.

Its function is as follows. Plays an important role in DNA replication, recombination and repair. Binds to ssDNA and to an array of partner proteins to recruit them to their sites of action during DNA metabolism. The polypeptide is Single-stranded DNA-binding protein 3 (ssb3) (Streptococcus agalactiae serotype V (strain ATCC BAA-611 / 2603 V/R)).